The primary structure comprises 158 residues: S-ribosylhomocysteine lyase (158 aa).

His56, His60, and Cys125 together coordinate Fe cation.

It belongs to the LuxS family. In terms of assembly, homodimer. The cofactor is Fe cation.

The enzyme catalyses S-(5-deoxy-D-ribos-5-yl)-L-homocysteine = (S)-4,5-dihydroxypentane-2,3-dione + L-homocysteine. Functionally, involved in the synthesis of autoinducer 2 (AI-2) which is secreted by bacteria and is used to communicate both the cell density and the metabolic potential of the environment. The regulation of gene expression in response to changes in cell density is called quorum sensing. Catalyzes the transformation of S-ribosylhomocysteine (RHC) to homocysteine (HC) and 4,5-dihydroxy-2,3-pentadione (DPD). The chain is S-ribosylhomocysteine lyase from Leuconostoc citreum (strain KM20).